Consider the following 120-residue polypeptide: NADH-quinone oxidoreductase subunit A (120 aa).

Helical transmembrane passes span 6–26 (YGIIAVFLVGGAATAVAALAT), 63–83 (FLYALVFLLFDVETVFLYPWA), and 89–109 (LGLFAFAEMIVFIGILVLGLW).

This sequence belongs to the complex I subunit 3 family. As to quaternary structure, NDH-1 is composed of 14 different subunits. Subunits NuoA, H, J, K, L, M, N constitute the membrane sector of the complex.

It is found in the cell membrane. The catalysed reaction is a quinone + NADH + 5 H(+)(in) = a quinol + NAD(+) + 4 H(+)(out). Its function is as follows. NDH-1 shuttles electrons from NADH, via FMN and iron-sulfur (Fe-S) centers, to quinones in the respiratory chain. The immediate electron acceptor for the enzyme in this species is believed to be a menaquinone. Couples the redox reaction to proton translocation (for every two electrons transferred, four hydrogen ions are translocated across the cytoplasmic membrane), and thus conserves the redox energy in a proton gradient. This chain is NADH-quinone oxidoreductase subunit A, found in Moorella thermoacetica (strain ATCC 39073 / JCM 9320).